Here is a 189-residue protein sequence, read N- to C-terminus: Nucleoside triphosphate pyrophosphatase (189 aa).

Aspartate 70 (proton acceptor) is an active-site residue.

Belongs to the Maf family. It depends on a divalent metal cation as a cofactor.

Its subcellular location is the cytoplasm. It catalyses the reaction a ribonucleoside 5'-triphosphate + H2O = a ribonucleoside 5'-phosphate + diphosphate + H(+). It carries out the reaction a 2'-deoxyribonucleoside 5'-triphosphate + H2O = a 2'-deoxyribonucleoside 5'-phosphate + diphosphate + H(+). Its function is as follows. Nucleoside triphosphate pyrophosphatase. May have a dual role in cell division arrest and in preventing the incorporation of modified nucleotides into cellular nucleic acids. The sequence is that of Nucleoside triphosphate pyrophosphatase from Xylella fastidiosa (strain 9a5c).